An 896-amino-acid chain; its full sequence is Trehalose-phosphatase (896 aa).

The tract at residues Met-1 to Thr-554 is glycosyltransferase.

It in the N-terminal section; belongs to the glycosyltransferase 20 family. In the C-terminal section; belongs to the trehalose phosphatase family. As to quaternary structure, the trehalose synthase complex is composed of the two catalytic subunits TPS1 and TPS2, and at least one of the two regulatory subunits TPS3 or TSL1. The cofactor is Mg(2+).

It is found in the cytoplasm. The enzyme catalyses alpha,alpha-trehalose 6-phosphate + H2O = alpha,alpha-trehalose + phosphate. It functions in the pathway carbohydrate biosynthesis. Its activity is regulated as follows. Inhibited by EDTA. Functionally, phosphatase catalytic subunit of the trehalose synthase complex that catalyzes the production of trehalose from glucose-6-phosphate and UDP-alpha-D-glucose in a two step process. In Saccharomyces cerevisiae (strain ATCC 204508 / S288c) (Baker's yeast), this protein is Trehalose-phosphatase.